The following is a 50-amino-acid chain: Ribosome-inactivating protein lyophyllin (50 aa).

It carries out the reaction Endohydrolysis of the N-glycosidic bond at one specific adenosine on the 28S rRNA.. N-glycosylase that inhibits protein synthesis by depurinating ribosomal rRNA, and thus acts as a ribosomal inactivating protein (RIP). Has adenine polynucleotide glycosidase activity on the poly(A) substrate A30-ssDNA. Inhibits cell-free translation in rabbit reticulocyte lysate system with an IC(50) of 1 nM. May function in the defense response to pathogens. Displays antifungal activity against C.comatus and P.piricola, but not against R.solani, M.arachidicola and C.gossypii. Inhibits mycelial growth in P.piricola with an IC(50) of 2.5 uM. Has cytotoxic activity against the human cancer cell lines Hela, HepG2, and JAR, with IC(50) of 358.8, 489.8, and 926.9 nM respectively. It also inhibits HIV-1 reverse transcriptase activity (IC(50)=7.9 nM) and disrupts mouse embryonic development. In Lyophyllum shimeji (Hon-shimeji), this protein is Ribosome-inactivating protein lyophyllin.